Here is a 376-residue protein sequence, read N- to C-terminus: Glucose-1-phosphate adenylyltransferase (376 aa).

Residues Tyr-101, Gly-166, 181–182 (EK), and Ser-192 contribute to the alpha-D-glucose 1-phosphate site.

The protein belongs to the bacterial/plant glucose-1-phosphate adenylyltransferase family. As to quaternary structure, homotetramer.

It catalyses the reaction alpha-D-glucose 1-phosphate + ATP + H(+) = ADP-alpha-D-glucose + diphosphate. It participates in glycan biosynthesis; glycogen biosynthesis. Involved in the biosynthesis of ADP-glucose, a building block required for the elongation reactions to produce glycogen. Catalyzes the reaction between ATP and alpha-D-glucose 1-phosphate (G1P) to produce pyrophosphate and ADP-Glc. The polypeptide is Glucose-1-phosphate adenylyltransferase (Bacillus cereus (strain ZK / E33L)).